A 239-amino-acid chain; its full sequence is DNA repair protein RecO (239 aa).

This sequence belongs to the RecO family.

Functionally, involved in DNA repair and RecF pathway recombination. The protein is DNA repair protein RecO of Bifidobacterium longum (strain DJO10A).